Consider the following 467-residue polypeptide: GTPase Der (467 aa).

EngA-type G domains are found at residues 25 to 188 and 199 to 372; these read PVVA…PEAP and RRVA…ASWE. GTP-binding positions include 31–38, 78–82, 140–143, 205–212, 252–256, and 317–320; these read GRPNVGKS, DTGGW, NKAD, DTAGL, and NKWD. A KH-like domain is found at 373–455; the sequence is TRVPTAQLNA…PIEIAVRPRK (83 aa).

Belongs to the TRAFAC class TrmE-Era-EngA-EngB-Septin-like GTPase superfamily. EngA (Der) GTPase family. In terms of assembly, associates with the 50S ribosomal subunit.

Its function is as follows. GTPase that plays an essential role in the late steps of ribosome biogenesis. This Salinispora arenicola (strain CNS-205) protein is GTPase Der.